The chain runs to 639 residues: 1-deoxy-D-xylulose-5-phosphate synthase (639 aa).

Thiamine diphosphate contacts are provided by residues H79 and 120–122 (AHS). Position 151 (D151) interacts with Mg(2+). Residues 152-153 (GA), N180, Y289, and E371 contribute to the thiamine diphosphate site. N180 contacts Mg(2+).

Belongs to the transketolase family. DXPS subfamily. Homodimer. Mg(2+) serves as cofactor. Requires thiamine diphosphate as cofactor.

It carries out the reaction D-glyceraldehyde 3-phosphate + pyruvate + H(+) = 1-deoxy-D-xylulose 5-phosphate + CO2. Its pathway is metabolic intermediate biosynthesis; 1-deoxy-D-xylulose 5-phosphate biosynthesis; 1-deoxy-D-xylulose 5-phosphate from D-glyceraldehyde 3-phosphate and pyruvate: step 1/1. Functionally, catalyzes the acyloin condensation reaction between C atoms 2 and 3 of pyruvate and glyceraldehyde 3-phosphate to yield 1-deoxy-D-xylulose-5-phosphate (DXP). The protein is 1-deoxy-D-xylulose-5-phosphate synthase of Allorhizobium ampelinum (strain ATCC BAA-846 / DSM 112012 / S4) (Agrobacterium vitis (strain S4)).